Reading from the N-terminus, the 441-residue chain is BTB/POZ domain-containing protein At4g30940 (441 aa).

The BTB domain occupies 6-74; sequence DRIKFNVGGR…LRTGDLNIPP (69 aa).

The protein operates within protein modification; protein ubiquitination. Functionally, may act as a substrate-specific adapter of an E3 ubiquitin-protein ligase complex (CUL3-RBX1-BTB) which mediates the ubiquitination and subsequent proteasomal degradation of target proteins. The chain is BTB/POZ domain-containing protein At4g30940 from Arabidopsis thaliana (Mouse-ear cress).